Reading from the N-terminus, the 326-residue chain is Beta-ketoacyl-[acyl-carrier-protein] synthase III (326 aa).

Residues C112 and H251 contribute to the active site. The ACP-binding stretch occupies residues 252 to 256 (QANSR). N281 is an active-site residue.

This sequence belongs to the thiolase-like superfamily. FabH family. As to quaternary structure, homodimer.

The protein resides in the cytoplasm. It catalyses the reaction malonyl-[ACP] + acetyl-CoA + H(+) = 3-oxobutanoyl-[ACP] + CO2 + CoA. The protein operates within lipid metabolism; fatty acid biosynthesis. Its function is as follows. Catalyzes the condensation reaction of fatty acid synthesis by the addition to an acyl acceptor of two carbons from malonyl-ACP. Catalyzes the first condensation reaction which initiates fatty acid synthesis and may therefore play a role in governing the total rate of fatty acid production. Possesses both acetoacetyl-ACP synthase and acetyl transacylase activities. Its substrate specificity determines the biosynthesis of branched-chain and/or straight-chain of fatty acids. The protein is Beta-ketoacyl-[acyl-carrier-protein] synthase III of Clostridium botulinum (strain ATCC 19397 / Type A).